The following is a 445-amino-acid chain: Phosphoglucosamine mutase (445 aa).

The active-site Phosphoserine intermediate is the Ser102. Mg(2+) contacts are provided by Ser102, Asp241, Asp243, and Asp245. Position 102 is a phosphoserine (Ser102).

The protein belongs to the phosphohexose mutase family. Requires Mg(2+) as cofactor. Activated by phosphorylation.

It catalyses the reaction alpha-D-glucosamine 1-phosphate = D-glucosamine 6-phosphate. Its function is as follows. Catalyzes the conversion of glucosamine-6-phosphate to glucosamine-1-phosphate. This is Phosphoglucosamine mutase from Edwardsiella ictaluri (strain 93-146).